The following is an 855-amino-acid chain: Discoidin domain-containing receptor 2 (855 aa).

Residues 1-21 (MILIPRMLLVLFLLLPILSSA) form the signal peptide. Residues 22 to 399 (KAQVNPAICR…MLKVDDSNTR (378 aa)) lie on the Extracellular side of the membrane. The region spanning 30–185 (CRYPLGMSGG…VCMRVELYGC (156 aa)) is the F5/8 type C domain. Cystine bridges form between C30–C185 and C73–C177. N121, N213, N261, N280, and N372 each carry an N-linked (GlcNAc...) asparagine glycan. A helical transmembrane segment spans residues 400-421 (ILIGCLVAIIFILLAIIVIILW). The Cytoplasmic segment spans residues 422–855 (RQFWQKMLEK…HLLLLQQGDE (434 aa)). Residues 452-471 (SMFNNNRSSSPSEQGSNSTY) form a disordered region. Y471 is subject to Phosphotyrosine; by SRC and autocatalysis. Residues 563 to 849 (LTFKEKLGEG…PSFQEIHLLL (287 aa)) form the Protein kinase domain. ATP is bound by residues 569-577 (LGEGQFGEV) and K608. Catalysis depends on D710, which acts as the Proton acceptor. 3 positions are modified to phosphotyrosine; by SRC and autocatalysis: Y736, Y740, and Y741.

It belongs to the protein kinase superfamily. Tyr protein kinase family. Insulin receptor subfamily. In terms of assembly, binds hydroxyproline-rich sequence motifs in fibrillar, glycosylated collagen, such as the GQOGVMGFO motif, where O stands for hydroxyproline. Interacts with SRC. Interacts (tyrosine phosphorylated) with SHC1. In terms of processing, N-glycosylated. Post-translationally, tyrosine phosphorylated in response to collagen binding. Phosphorylated by SRC; this is required for activation and subsequent autophosphorylation on additional tyrosine residues. As to expression, detected in osteocytes, osteoblastic cells in subchondral bone, bone lining cells, tibia and cartilage (at protein level). Detected at high levels in heart and lung, and at low levels in brain, placenta, liver, skeletal muscle, pancreas, and kidney.

The protein resides in the cell membrane. It catalyses the reaction L-tyrosyl-[protein] + ATP = O-phospho-L-tyrosyl-[protein] + ADP + H(+). With respect to regulation, present in an inactive state in the absence of collagen binding and phosphorylation by SRC. Tyrosine phosphorylation enhances the affinity for ATP and the catalytic activity. Tyrosine kinase involved in the regulation of tissues remodeling. It functions as a cell surface receptor for fibrillar collagen and regulates cell differentiation, remodeling of the extracellular matrix, cell migration and cell proliferation. Required for normal bone development. Regulates osteoblast differentiation and chondrocyte maturation via a signaling pathway that involves MAP kinases and leads to the activation of the transcription factor RUNX2. Regulates remodeling of the extracellular matrix by up-regulation of the collagenases MMP1, MMP2 and MMP13, and thereby facilitates cell migration and tumor cell invasion. Promotes fibroblast migration and proliferation, and thereby contributes to cutaneous wound healing. This chain is Discoidin domain-containing receptor 2 (DDR2), found in Homo sapiens (Human).